We begin with the raw amino-acid sequence, 405 residues long: Glucose-1-phosphate adenylyltransferase (405 aa).

Alpha-D-glucose 1-phosphate-binding positions include Tyr-96, Gly-161, 176–177 (EK), and Ser-194.

It belongs to the bacterial/plant glucose-1-phosphate adenylyltransferase family. As to quaternary structure, homotetramer.

The enzyme catalyses alpha-D-glucose 1-phosphate + ATP + H(+) = ADP-alpha-D-glucose + diphosphate. Its pathway is glycan biosynthesis; glycogen biosynthesis. In terms of biological role, involved in the biosynthesis of ADP-glucose, a building block required for the elongation reactions to produce glycogen. Catalyzes the reaction between ATP and alpha-D-glucose 1-phosphate (G1P) to produce pyrophosphate and ADP-Glc. This is Glucose-1-phosphate adenylyltransferase from Aliivibrio fischeri (strain MJ11) (Vibrio fischeri).